The following is a 168-amino-acid chain: HTH-type transcriptional regulator IscR (168 aa).

The 130-residue stretch at 2 to 131 folds into the HTH rrf2-type domain; sequence KLTSKGRYAV…NNITLGELMT (130 aa). The segment at residues 28 to 51 is a DNA-binding region (H-T-H motif); the sequence is LADISERQGISLSYLEQLFSKLRK. [2Fe-2S] cluster contacts are provided by Cys92, Cys98, and Cys104.

It depends on [2Fe-2S] cluster as a cofactor.

In terms of biological role, regulates the transcription of several operons and genes involved in the biogenesis of Fe-S clusters and Fe-S-containing proteins. This chain is HTH-type transcriptional regulator IscR, found in Vibrio parahaemolyticus serotype O3:K6 (strain RIMD 2210633).